A 220-amino-acid polypeptide reads, in one-letter code: Large ribosomal subunit protein uL3 (220 aa).

This sequence belongs to the universal ribosomal protein uL3 family. As to quaternary structure, part of the 50S ribosomal subunit. Forms a cluster with proteins L14 and L19.

Functionally, one of the primary rRNA binding proteins, it binds directly near the 3'-end of the 23S rRNA, where it nucleates assembly of the 50S subunit. In Staphylococcus haemolyticus (strain JCSC1435), this protein is Large ribosomal subunit protein uL3.